The sequence spans 546 residues: Chaperonin GroEL (546 aa).

ATP is bound by residues Thr-30 to Pro-33, Lys-51, Asp-87 to Thr-91, Gly-415, Asn-479 to Ala-481, and Asp-495. The interval Asp-527–Met-546 is disordered. The segment covering Gly-536–Met-546 has biased composition (gly residues).

Belongs to the chaperonin (HSP60) family. In terms of assembly, forms a cylinder of 14 subunits composed of two heptameric rings stacked back-to-back. Interacts with the co-chaperonin GroES.

It is found in the cytoplasm. It carries out the reaction ATP + H2O + a folded polypeptide = ADP + phosphate + an unfolded polypeptide.. Its function is as follows. Together with its co-chaperonin GroES, plays an essential role in assisting protein folding. The GroEL-GroES system forms a nano-cage that allows encapsulation of the non-native substrate proteins and provides a physical environment optimized to promote and accelerate protein folding. In Acidovorax ebreus (strain TPSY) (Diaphorobacter sp. (strain TPSY)), this protein is Chaperonin GroEL.